The chain runs to 337 residues: MNAPQAPVLVADIGGTNARFALANPTLTSAPLLNDSLREFAVIEFPSLSEAAQHYLHHIGIHTTKGVFAIAGHVDGDEARITNHPWVITRTRTATMLGFDTLHLINDFVAQAMAISVLGPQDVIQIGSAKWEQVPLSAATRNYGIIGPGTGLGVGGLVIRNGRCYPLETEGGHVSFPPSTPEEIRILEILSQQFGRVSNERLISGPGLVNIHRALSEIDGIDPGPLRPQDITMRAADGDIRATRTINLFCNIFGAITGDLVLIQGAWDGVFLTGGLVPKLLNSIQHSGFRQKFEHKGRFSAIMARIPSLAVIHPHPGLLGAAAYARDTEPVPQDIKA.

Position 11–16 (11–16 (ADIGGT)) interacts with ATP.

The protein belongs to the bacterial glucokinase family.

The protein resides in the cytoplasm. The catalysed reaction is D-glucose + ATP = D-glucose 6-phosphate + ADP + H(+). The polypeptide is Glucokinase (Xylella fastidiosa (strain 9a5c)).